A 49-amino-acid chain; its full sequence is Large ribosomal subunit protein bL33 (49 aa).

This sequence belongs to the bacterial ribosomal protein bL33 family.

This is Large ribosomal subunit protein bL33 from Syntrophotalea carbinolica (strain DSM 2380 / NBRC 103641 / GraBd1) (Pelobacter carbinolicus).